A 1134-amino-acid chain; its full sequence is DNA polymerase II large subunit (1134 aa).

This sequence belongs to the archaeal DNA polymerase II family. As to quaternary structure, heterodimer of a large subunit and a small subunit.

It catalyses the reaction DNA(n) + a 2'-deoxyribonucleoside 5'-triphosphate = DNA(n+1) + diphosphate. It carries out the reaction Exonucleolytic cleavage in the 3'- to 5'-direction to yield nucleoside 5'-phosphates.. Possesses two activities: a DNA synthesis (polymerase) and an exonucleolytic activity that degrades single-stranded DNA in the 3'- to 5'-direction. Has a template-primer preference which is characteristic of a replicative DNA polymerase. The sequence is that of DNA polymerase II large subunit from Methanocella arvoryzae (strain DSM 22066 / NBRC 105507 / MRE50).